The primary structure comprises 74 residues: MARPFFRRRKSCPFAAKDAPKIDYKDVRLLQGFVSERGKIVPSRITAVSAKKQRELARAIKRARHIGLLPFIVK.

It belongs to the bacterial ribosomal protein bS18 family. Part of the 30S ribosomal subunit. Forms a tight heterodimer with protein bS6.

Functionally, binds as a heterodimer with protein bS6 to the central domain of the 16S rRNA, where it helps stabilize the platform of the 30S subunit. This Zymomonas mobilis subsp. mobilis (strain ATCC 31821 / ZM4 / CP4) protein is Small ribosomal subunit protein bS18.